Consider the following 437-residue polypeptide: Glucose-1-phosphate adenylyltransferase (437 aa).

Alpha-D-glucose 1-phosphate is bound by residues Y113, G179, 194–195 (EK), and S212.

It belongs to the bacterial/plant glucose-1-phosphate adenylyltransferase family. In terms of assembly, homotetramer.

The catalysed reaction is alpha-D-glucose 1-phosphate + ATP + H(+) = ADP-alpha-D-glucose + diphosphate. Its pathway is glycan biosynthesis; glycogen biosynthesis. Functionally, involved in the biosynthesis of ADP-glucose, a building block required for the elongation reactions to produce glycogen. Catalyzes the reaction between ATP and alpha-D-glucose 1-phosphate (G1P) to produce pyrophosphate and ADP-Glc. This chain is Glucose-1-phosphate adenylyltransferase, found in Haemophilus influenzae (strain 86-028NP).